The sequence spans 174 residues: Negative modulator of initiation of replication (174 aa).

Belongs to the SeqA family. In terms of assembly, homodimer. Polymerizes to form helical filaments.

It localises to the cytoplasm. Negative regulator of replication initiation, which contributes to regulation of DNA replication and ensures that replication initiation occurs exactly once per chromosome per cell cycle. Binds to pairs of hemimethylated GATC sequences in the oriC region, thus preventing assembly of replication proteins and re-initiation at newly replicated origins. Repression is relieved when the region becomes fully methylated. The polypeptide is Negative modulator of initiation of replication (Pseudoalteromonas atlantica (strain T6c / ATCC BAA-1087)).